A 105-amino-acid polypeptide reads, in one-letter code: Large ribosomal subunit protein bL21 (105 aa).

The protein belongs to the bacterial ribosomal protein bL21 family. In terms of assembly, part of the 50S ribosomal subunit. Contacts protein L20.

In terms of biological role, this protein binds to 23S rRNA in the presence of protein L20. This Rickettsia africae (strain ESF-5) protein is Large ribosomal subunit protein bL21.